A 192-amino-acid chain; its full sequence is PTS-dependent dihydroxyacetone kinase, ADP-binding subunit DhaL (192 aa).

Positions 5 to 189 (DTTIEWLGKF…SAYLFETLLE (185 aa)) constitute a DhaL domain. Mg(2+) contacts are provided by aspartate 29, aspartate 34, and aspartate 36. Residues 37 to 40 (HGAN), 78 to 79 (AS), glycine 115, methionine 124, arginine 161, and 174 to 176 (DPG) each bind ADP.

In terms of assembly, homodimer. The dihydroxyacetone kinase complex is composed of a homodimer of DhaM, a homodimer of DhaK and the subunit DhaL. Mg(2+) serves as cofactor.

Its subcellular location is the cytoplasm. The catalysed reaction is dihydroxyacetone + phosphoenolpyruvate = dihydroxyacetone phosphate + pyruvate. It functions in the pathway polyol metabolism; glycerol degradation. ADP-binding subunit of the dihydroxyacetone kinase, which is responsible for the phosphoenolpyruvate (PEP)-dependent phosphorylation of dihydroxyacetone. DhaL-ADP is converted to DhaL-ATP via a phosphoryl group transfer from DhaM and transmits it to dihydroxyacetone binds to DhaK. This chain is PTS-dependent dihydroxyacetone kinase, ADP-binding subunit DhaL, found in Lactococcus lactis subsp. lactis (strain IL1403) (Streptococcus lactis).